The following is a 284-amino-acid chain: 2,3,4,5-tetrahydropyridine-2,6-dicarboxylate N-succinyltransferase (284 aa).

Substrate contacts are provided by arginine 111 and aspartate 148.

The protein belongs to the transferase hexapeptide repeat family. As to quaternary structure, homotrimer.

The protein resides in the cytoplasm. The catalysed reaction is (S)-2,3,4,5-tetrahydrodipicolinate + succinyl-CoA + H2O = (S)-2-succinylamino-6-oxoheptanedioate + CoA. It participates in amino-acid biosynthesis; L-lysine biosynthesis via DAP pathway; LL-2,6-diaminopimelate from (S)-tetrahydrodipicolinate (succinylase route): step 1/3. The chain is 2,3,4,5-tetrahydropyridine-2,6-dicarboxylate N-succinyltransferase from Brucella anthropi (strain ATCC 49188 / DSM 6882 / CCUG 24695 / JCM 21032 / LMG 3331 / NBRC 15819 / NCTC 12168 / Alc 37) (Ochrobactrum anthropi).